Reading from the N-terminus, the 223-residue chain is PKHD-type hydroxylase CPS_3426 (223 aa).

The region spanning 77 to 175 is the Fe2OG dioxygenase domain; it reads KSMMPFIISE…RKVALTWIES (99 aa). H96, D98, and H156 together coordinate Fe cation. Position 166 (R166) interacts with 2-oxoglutarate.

The cofactor is Fe(2+). Requires L-ascorbate as cofactor.

The polypeptide is PKHD-type hydroxylase CPS_3426 (Colwellia psychrerythraea (strain 34H / ATCC BAA-681) (Vibrio psychroerythus)).